The primary structure comprises 151 residues: Probable transport accessory protein MmpS1 (151 aa).

2 helical membrane passes run phenylalanine 8–leucine 28 and valine 81–alanine 101.

It belongs to the MmpS family.

It localises to the cell membrane. In Mycobacterium tuberculosis (strain CDC 1551 / Oshkosh), this protein is Probable transport accessory protein MmpS1 (mmpS1).